Here is a 272-residue protein sequence, read N- to C-terminus: Heat stress transcription factor A-7a (272 aa).

Residues 1–26 (MMNPFLPEGCDPPPPPQPMEGLHENA) are disordered. A DNA-binding region spans residues 27–121 (PPPFLTKTFE…LLKNIKRRNP (95 aa)). The segment at 132–186 (ACNELRREKQVLMMEIVSLRQQQQTTKSYIKAMEQRIEGTERKQRQMMSFLARAM) is hydrophobic repeat HR-A/B. The short motif at 201-216 (KKIKELEDNESAKRKR) is the Bipartite nuclear localization signal element. A compositionally biased stretch (basic and acidic residues) spans 203–212 (IKELEDNESA). The segment at 203 to 223 (IKELEDNESAKRKRGSSSMSE) is disordered. The short motif at 256 to 265 (DGFWEELLSD) is the AHA element.

It belongs to the HSF family. Class A subfamily. Homotrimer. In terms of processing, exhibits temperature-dependent phosphorylation.

It is found in the nucleus. Functionally, transcriptional activator that specifically binds DNA sequence 5'-AGAAnnTTCT-3' known as heat shock promoter elements (HSE). The sequence is that of Heat stress transcription factor A-7a (HSFA7A) from Arabidopsis thaliana (Mouse-ear cress).